A 387-amino-acid chain; its full sequence is Putative protein FAM157C (387 aa).

Disordered regions lie at residues 1–21 (MGPL…PLPK), 182–226 (TARP…GAEP), and 329–353 (RARD…TSSG).

The protein belongs to the FAM157 family.

The chain is Putative protein FAM157C (FAM157C) from Homo sapiens (Human).